Consider the following 155-residue polypeptide: Small ribosomal subunit protein uS7 (155 aa).

The protein belongs to the universal ribosomal protein uS7 family. Part of the 30S ribosomal subunit. Contacts proteins S9 and S11.

In terms of biological role, one of the primary rRNA binding proteins, it binds directly to 16S rRNA where it nucleates assembly of the head domain of the 30S subunit. Is located at the subunit interface close to the decoding center, probably blocks exit of the E-site tRNA. This Xylella fastidiosa (strain 9a5c) protein is Small ribosomal subunit protein uS7.